Here is a 1158-residue protein sequence, read N- to C-terminus: MTLHAYLGRAGTGKSTKMLTEIKQKMKADPLGDPIILIAPTQSTFQLEQAFVNDPELNGSLRTEVLHFERLSHRIFQEVGSYSEQKLSKAATEMMIYNIVQEQQKYLKLYQSQAKYYGFSEKLTEQIQDFKKYAVTPEHLEHFIADKNMQTRTKNKLEDIALIYREFEQRIQNEFITGEDSLQYFIDCMPKSEWLKRADIYIDGFHNFSTIEYLIIKGLIKYAKSVTIILTTDGNHDQFSLFRKPSEVLRHIEEIANELNISIERQYFNQLYRFNNQDLKHLEQEFDALQINRVACQGHINILESATMREEINEIARRIIVDIRDKQLRYQDIAILYRDESYAYLFDSILPLYNIPYNIDTKRSMTHHPVMEMIRSLIEVIQSNWQVNPMLRLLKTDVLTASYLKSAYLVDLLENFVLERGIYGKRWLDDELFNVEHFSKMGRKGHKLTEDERNTFEQVVKLKKDVIDKILHFEKQMSQAETVKDFATAFYESMEYFELPNQLMTERDELDLNGNHEKAEEIDQIWNGLIQILDDLVLVFGDEPMSMERFLEVFDIGLEQLEFVMIPQTLDQVSIGTMDLAKVDNKQHVYLVGMNDGTMPQPVTASSLITDEEKKYFEQQANVELSPTSDILQMDEAFVCYVAMTRAKGDVTFSYSLMGSSGDDKEISPFLNQIQSLFNQLEITNIPQYHEVNPLSLMQHAKQTKITLFEALRAWLYDEIVADSWLDAYQVIRDSDHLNQGLDYLMSALTFDNETVKLGETLSKDLYGKEINASVSRFEGYQQCPFKHYASHGLKLNERTKYELQNFDLGDIFHSVLKYISERINGDFKQLDLKKIRQLTNEALEEILPKVQFNLLNSSAYYRYLSRRIGAIVETTLSALKYQGTYSKFMPKHFETSFRRKPRTNDELIAQTLTTTQGIPINIRGQIDRIDTYTKNDTSFVNIIDYKSSEGSATLDLTKVYYGMQMQMMTYMDIVLQNKQRLGLTDIVKPGGLLYFHVHEPRIKFKSWSDIDEDKLEQDLIKKFKLSGLVNADQTVIDALDIRLEPKFTSDIVPVGLNKDGSLSKRGSQVADEATIYKFIQHNKENFIETASNIMDGHTEVAPLKYKQKLPCAFCSYQSVCHVDGMIDSKRYRTVDETINPIEAIQNININDEFGGEQ.

The region spanning 1–275 (MTLHAYLGRA…QYFNQLYRFN (275 aa)) is the UvrD-like helicase ATP-binding domain. Position 8 to 15 (8 to 15 (GRAGTGKS)) interacts with ATP. Residues 269–583 (NQLYRFNNQD…SIGTMDLAKV (315 aa)) form the UvrD-like helicase C-terminal domain. [4Fe-4S] cluster contacts are provided by Cys784, Cys1112, Cys1115, and Cys1121.

Belongs to the helicase family. AddB/RexB type 1 subfamily. As to quaternary structure, heterodimer of AddA and AddB. Mg(2+) is required as a cofactor. It depends on [4Fe-4S] cluster as a cofactor.

In terms of biological role, the heterodimer acts as both an ATP-dependent DNA helicase and an ATP-dependent, dual-direction single-stranded exonuclease. Recognizes the chi site generating a DNA molecule suitable for the initiation of homologous recombination. The AddB subunit has 5' -&gt; 3' nuclease activity but not helicase activity. The polypeptide is ATP-dependent helicase/deoxyribonuclease subunit B (Staphylococcus aureus (strain COL)).